The primary structure comprises 405 residues: uncharacterized protein (405 aa).

The next 12 helical transmembrane spans lie at 19-39, 47-67, 85-105, 107-127, 156-176, 178-198, 224-244, 252-272, 283-303, 309-329, 344-364, and 366-386; these read IVSIVMFNFASYLTIGLPLAV, VMGFSAFWAGLVISLQYFATL, IVVFGLCGCFLSGLGYLTAGL, ASLPVISLLLLCLGRVILGIG, GIVTYGAMAMGAPLGVVFYHW, GLQALALIIMGVALVAILLAI, GMALALASAGFGVIATFITLF, GAAFALTLFSCAFVGTRLLFP, VAMICFSVEIIGLLLVGVATM, IGVLLAGAGFSLVFPALGVVA, TYTVFMDLSLGVTGPLAGLVM, and WAGVPVIYLAAAGLVAIALLL.

It belongs to the major facilitator superfamily. YhhS family.

The protein resides in the cell inner membrane. This is an uncharacterized protein from Escherichia coli O6:H1 (strain CFT073 / ATCC 700928 / UPEC).